The primary structure comprises 241 residues: uncharacterized protein (241 aa).

A GGDEF domain is found at 84–216 (TVVSLVVCDL…APGPVVAGRD (133 aa)). A disordered region spans residues 215–241 (RDGEVVRLADSPPKSAHDRRRLRGNRP). The segment covering 231 to 241 (HDRRRLRGNRP) has biased composition (basic residues).

This is an uncharacterized protein from Streptomyces griseus.